Consider the following 89-residue polypeptide: Small ribosomal subunit protein uS15 (89 aa).

The protein belongs to the universal ribosomal protein uS15 family. In terms of assembly, part of the 30S ribosomal subunit. Forms a bridge to the 50S subunit in the 70S ribosome, contacting the 23S rRNA.

In terms of biological role, one of the primary rRNA binding proteins, it binds directly to 16S rRNA where it helps nucleate assembly of the platform of the 30S subunit by binding and bridging several RNA helices of the 16S rRNA. Forms an intersubunit bridge (bridge B4) with the 23S rRNA of the 50S subunit in the ribosome. The chain is Small ribosomal subunit protein uS15 from Chlorobium phaeovibrioides (strain DSM 265 / 1930) (Prosthecochloris vibrioformis (strain DSM 265)).